A 222-amino-acid polypeptide reads, in one-letter code: tRNA (guanine-N(1)-)-methyltransferase (222 aa).

S-adenosyl-L-methionine-binding positions include G110 and I130–L135.

This sequence belongs to the RNA methyltransferase TrmD family. In terms of assembly, homodimer.

It is found in the cytoplasm. It catalyses the reaction guanosine(37) in tRNA + S-adenosyl-L-methionine = N(1)-methylguanosine(37) in tRNA + S-adenosyl-L-homocysteine + H(+). Its function is as follows. Specifically methylates guanosine-37 in various tRNAs. This is tRNA (guanine-N(1)-)-methyltransferase from Protochlamydia amoebophila (strain UWE25).